A 996-amino-acid chain; its full sequence is Disease resistance protein RGA4 (996 aa).

The segment at 1–176 is structured coiled coil (CC) domain; it reads MEAALLSGFI…PRIHEADLVG (176 aa). The stretch at 111–138 forms a coiled coil; the sequence is NLQLAQQLQRLKRMAAEANQRKQRYTAA. The NB-ARC domain occupies 180 to 462; it reads DREELLEQLA…RWLAEGFVEP (283 aa). LRR repeat units follow at residues 481 to 503, 504 to 528, 529 to 549, 577 to 599, 600 to 621, 622 to 644, 698 to 722, 759 to 781, 782 to 804, 805 to 830, and 851 to 874; these read RNII…TYGM, MREF…KFVP, KYVR…NFNG, LRVL…ICNL, VLLK…IAKL, KDLE…VFGL, MNKL…DLRE, PCYL…VTSL, RGLK…ALSN, LSYL…GFPR, and LPFL…QIEC.

The protein belongs to the disease resistance NB-LRR family. In terms of assembly, forms homodimer or heterodimer with RGA5 through its coiled coil (CC) domain. As to expression, expressed in leaves.

It localises to the cytoplasm. In terms of biological role, disease resistance (R) protein. Resistance proteins guard the plant against pathogens that contain an appropriate avirulence protein via an indirect interaction with this avirulence protein. That triggers a defense system including the hypersensitive response, which restricts the pathogen growth. Contribution of RGA5 is required to recognize the effector avirulence proteins AVR-Pia and AVR1-CO39 from M.oryzae. Acts as a constitutively active cell death inducer that is repressed by RGA5. Immune response triggered by the RGA4-RGA5 -mediated recognition of AVR1-CO39 confers resistance to X.oryzae pathovars. The polypeptide is Disease resistance protein RGA4 (Oryza sativa subsp. japonica (Rice)).